The chain runs to 231 residues: Flagellar L-ring protein (231 aa).

An N-terminal signal peptide occupies residues 1–18 (MNRYVSVLALSGIAVLAG). Cysteine 19 carries the N-palmitoyl cysteine lipid modification. Residue cysteine 19 is the site of S-diacylglycerol cysteine attachment.

Belongs to the FlgH family. The basal body constitutes a major portion of the flagellar organelle and consists of four rings (L,P,S, and M) mounted on a central rod.

Its subcellular location is the cell outer membrane. It is found in the bacterial flagellum basal body. In terms of biological role, assembles around the rod to form the L-ring and probably protects the motor/basal body from shearing forces during rotation. In Pseudomonas fluorescens (strain SBW25), this protein is Flagellar L-ring protein.